Reading from the N-terminus, the 287-residue chain is Probable endonuclease 4 (287 aa).

Residues histidine 69, histidine 109, glutamate 144, aspartate 178, histidine 181, histidine 215, aspartate 228, histidine 230, and glutamate 260 each coordinate Zn(2+).

The protein belongs to the AP endonuclease 2 family. Requires Zn(2+) as cofactor.

It carries out the reaction Endonucleolytic cleavage to 5'-phosphooligonucleotide end-products.. Functionally, endonuclease IV plays a role in DNA repair. It cleaves phosphodiester bonds at apurinic or apyrimidinic (AP) sites, generating a 3'-hydroxyl group and a 5'-terminal sugar phosphate. This is Probable endonuclease 4 from Thermotoga neapolitana (strain ATCC 49049 / DSM 4359 / NBRC 107923 / NS-E).